Consider the following 479-residue polypeptide: Sucrose-6-phosphate hydrolase (479 aa).

Substrate contacts are provided by residues 44–47 (LLND), Q63, 106–107 (YS), 166–167 (RD), and E223. Residue D47 is part of the active site.

Belongs to the glycosyl hydrolase 32 family.

The protein localises to the cytoplasm. It catalyses the reaction Hydrolysis of terminal non-reducing beta-D-fructofuranoside residues in beta-D-fructofuranosides.. It functions in the pathway glycan biosynthesis; sucrose metabolism. The chain is Sucrose-6-phosphate hydrolase (scrB) from Streptococcus mutans serotype c (strain ATCC 700610 / UA159).